The following is a 459-amino-acid chain: Alcohol acyl transferase 2 (459 aa).

Residues His-164 and Asn-385 each act as proton acceptor in the active site.

It belongs to the plant acyltransferase family. Highly expressed in the cortex and skin of ripe fruit.

Its function is as follows. Involved in the biosynthesis of volatile esters which confer ripe apple fruit flavor. Alcohol acyl transferase that can use a wide range of alcohols as substrate to produce esters. The sequence is that of Alcohol acyl transferase 2 from Malus domestica (Apple).